The primary structure comprises 2797 residues: Nonribosomal peptide synthetase penN (2797 aa).

The tract at residues S239–R625 is adenylation 1. The Carrier 1 domain occupies T751 to T824. S785 is modified (O-(pantetheine 4'-phosphoryl)serine). The interval P830–Y856 is disordered. Residues Q870 to T1299 are condensation 1. The tract at residues F1328–R1731 is adenylation 2. The interval L1857–D1953 is methyltransferase. A Carrier 2 domain is found at S2277–R2351. The residue at position 2311 (S2311) is an O-(pantetheine 4'-phosphoryl)serine. The condensation 2 stretch occupies residues Y2516–L2658.

This sequence belongs to the NRP synthetase family.

It carries out the reaction O-methyl-L-tyrosine + anthranilate + S-adenosyl-L-methionine + 2 ATP = (-)-4'-methoxycyclopeptine + 2 AMP + S-adenosyl-L-homocysteine + 2 diphosphate + 2 H(+). It catalyses the reaction anthranilate + L-phenylalanine + S-adenosyl-L-methionine + 2 ATP = cyclopeptine + 2 AMP + S-adenosyl-L-homocysteine + 2 diphosphate + 2 H(+). It functions in the pathway secondary metabolite biosynthesis. The protein operates within alkaloid biosynthesis. Its pathway is mycotoxin biosynthesis. In terms of biological role, nonribosomal peptide synthetase; part of the gene cluster that mediates the biosynthesis of penigequinolones, potent insecticidal alkaloids that contain a highly modified 10-carbon prenyl group. The first stage is catalyzed by the nonribosomal peptide synthetase penN that condenses anthranilic acid and O-methyl-L-tyrosine to produce 4'-methoxycyclopeptin. 4'-methoxycyclopeptin is then converted to 4'-methoxydehydrocyclopeptin by the ketoglutarate-dependent dioxygenase penM through dehydrogenation to form a double bond between C-alpha and C-beta of the O-methyltyrosine side chain. PenM also converts its first product methoxydehydrocyclopeptin to 4'-methoxycyclopenin. The following conversion of 4'methoxycyclopenin into 4'-methoxyviridicatin is catalyzed by the cyclopenase penL. 4'-methoxyviridicatin is the precursor of quinolone natural products, and is further converted to quinolinone B. The prenyltransferase penI then catalyzes the canonical Friedel-Crafts alkylation of quinolinone B with dimethylallyl cation to yield dimethylallyl quinolone, which is subjected to FAD-dependent dehydrogenation by the FAD-linked oxidoreductase penH to yield conjugated aryl diene. The delta(3') double bond then serves as the site of the second alkylation with DMAPP catalyzed by the prenyltransferase penG to yield a carbenium ion intermediate, which can be attacked by H(2)O to yield a styrenyl quinolone containing a C3'-hydroxyprenyl chain, or undergo cyclization to yield yaequinolones J1 and J2. The conversion of the styrenyl quinolone into the tetrahydrofuran-containing yaequinolone C is performed by the FAD-dependent monooxygenase penE and involves epoxidation of the terminal C7'-C8' olefin, followed by epoxide ring opening initiated by the C3' hydroxyl group. The predicted cysteine hydrolase penJ acts as an epoxide hydrolase that enhances the rate of the 5-exo-tet cyclization step, increasing the yield of yaequinolone C. PenF catalyzes the cationic rearrangement of the epoxide formed by penE (before ring opening to produce yaequinolone C) into yaequinolone D. Finally, the short-chain dehydrogenase/reductase (SDR)-like reductase penD, catalyzes both the dehydration of yaequinolone D and the reduction of the resulting oxonium to yield penigequinolone. This is Nonribosomal peptide synthetase penN from Penicillium thymicola.